The chain runs to 423 residues: Immunity-related GTPase family M protein 3 (423 aa).

The IRG-type G domain maps to 83-260 (YRVKIAVTGD…PELRNTLQKD (178 aa)). GTP contacts are provided by residues 92–99 (DSGNGMSS), 117–121 (TGVVR), and 200–202 (KLD).

The protein belongs to the TRAFAC class dynamin-like GTPase superfamily. IRG family.

The protein resides in the endoplasmic reticulum. It localises to the cytoplasmic vesicle membrane. Its subcellular location is the lipid droplet. It carries out the reaction GTP + H2O = GDP + phosphate + H(+). Its function is as follows. Immunity-related GTPase that plays important roles in host resistance to acute infection by protozoan, such as Toxoplasma gondii and Leishmania major. Acts as a dynamin-like protein that binds to intracellular membranes and promotes remodeling and trafficking of those membranes. Acts predominantly to restrict acute protozoan infection: expression is required in both hematopoietic and non-hematopoietic cellular compartments and is dependent on Stat1. Only plays a partial role in the control of latent Toxoplasma infection. Involved in the clearance of acute protozoan infections by regulating autophagy, possibly by promoting the fusion of phagosomes with lysosomes for efficient degradation of vacuoles containing parasites. Probably involved in membrane disruption of parasite-containing vacuoles. In addition to its role in resistance to acute infection by protozoan, also acts as a negative regulator of the integrated stress response (ISR) following coxsackievirus B3 infection. Promotes differentiation of activated CD8(+) T-cells. In Mus musculus (Mouse), this protein is Immunity-related GTPase family M protein 3.